A 287-amino-acid chain; its full sequence is Phosphatidylserine decarboxylase proenzyme (287 aa).

Active-site charge relay system; for autoendoproteolytic cleavage activity residues include aspartate 90, histidine 147, and serine 252. The Schiff-base intermediate with substrate; via pyruvic acid; for decarboxylase activity role is filled by serine 252. A Pyruvic acid (Ser); by autocatalysis modification is found at serine 252.

The protein belongs to the phosphatidylserine decarboxylase family. PSD-B subfamily. Prokaryotic type I sub-subfamily. As to quaternary structure, heterodimer of a large membrane-associated beta subunit and a small pyruvoyl-containing alpha subunit. Pyruvate is required as a cofactor. Is synthesized initially as an inactive proenzyme. Formation of the active enzyme involves a self-maturation process in which the active site pyruvoyl group is generated from an internal serine residue via an autocatalytic post-translational modification. Two non-identical subunits are generated from the proenzyme in this reaction, and the pyruvate is formed at the N-terminus of the alpha chain, which is derived from the carboxyl end of the proenzyme. The autoendoproteolytic cleavage occurs by a canonical serine protease mechanism, in which the side chain hydroxyl group of the serine supplies its oxygen atom to form the C-terminus of the beta chain, while the remainder of the serine residue undergoes an oxidative deamination to produce ammonia and the pyruvoyl prosthetic group on the alpha chain. During this reaction, the Ser that is part of the protease active site of the proenzyme becomes the pyruvoyl prosthetic group, which constitutes an essential element of the active site of the mature decarboxylase.

It is found in the cell membrane. It carries out the reaction a 1,2-diacyl-sn-glycero-3-phospho-L-serine + H(+) = a 1,2-diacyl-sn-glycero-3-phosphoethanolamine + CO2. It functions in the pathway phospholipid metabolism; phosphatidylethanolamine biosynthesis; phosphatidylethanolamine from CDP-diacylglycerol: step 2/2. Its function is as follows. Catalyzes the formation of phosphatidylethanolamine (PtdEtn) from phosphatidylserine (PtdSer). The sequence is that of Phosphatidylserine decarboxylase proenzyme from Pseudomonas putida (strain GB-1).